A 356-amino-acid chain; its full sequence is Leucine-rich repeat and transmembrane domain-containing protein 1 (356 aa).

Residues Met1–Ser32 form the signal peptide. An LRRNT domain is found at Cys33 to Pro62. At Cys33 to Thr299 the chain is on the extracellular side. 5 LRR repeats span residues Trp63 to Ser84, Leu87 to Gly108, His111 to Ala132, Gly135 to Pro156, and Asn159 to Ala180. Residues Asn92 and Asn116 are each glycosylated (N-linked (GlcNAc...) asparagine). Residue Asn159 is glycosylated (N-linked (GlcNAc...) asparagine). In terms of domain architecture, LRRCT spans Asn192–Leu246. The segment covering Leu255–Gln277 has biased composition (polar residues). Residues Leu255–Pro288 are disordered. Residues Val300–Tyr320 form a helical membrane-spanning segment. The Cytoplasmic segment spans residues Gly321–Ala356.

Its subcellular location is the membrane. The chain is Leucine-rich repeat and transmembrane domain-containing protein 1 (Lrtm1) from Mus musculus (Mouse).